The sequence spans 445 residues: MGKNILFFSFVGVMVLVLVACGGSSSSSSDADETSVIGDDIEGATELIFWTFAGQHVDLFEDAVVSWNEEFPDRPIKLVAETYPFDQMHNNLLLALQSGSGAPDLADIEVSRFPNFLQGVPQLLPMNDHVEPVIDKFVEARFNLYAKDGEYYGIPTHVGASVMYYNKEIMDEAGVDIESIETWDDYVEAGKQVVERTGKVMTTVPTDDYLPMFQMVSQRGSDFFDENGNLTLDTQENIEVLQFLYDLIYVHEIAELTPGGQPHAEEYYQYMNDGNVASMAMPIWYMGRFLDNMPDLAGKMLIQPLPAWEEGGFRSAGMGGTGTVVTNQTDHEELAKDFLAYAKISEKANEKLWTILGFDPPRWDVWDNPVFQEDNDFYQFFGENIFEVLLDVRDEINSINISQYTPSVANEFSTNIFNDVLRQQTHTPEEALKKAQETIEANMQQ.

An N-terminal signal peptide occupies residues 1–20; sequence MGKNILFFSFVGVMVLVLVA. A lipid anchor (N-palmitoyl cysteine) is attached at Cys-21. A lipid anchor (S-diacylglycerol cysteine) is attached at Cys-21.

It belongs to the bacterial solute-binding protein 1 family. In terms of assembly, the complex is composed of two ATP-binding proteins (MsmX), two transmembrane proteins (AraP and AraQ) and a solute-binding protein (AraN).

The protein localises to the cell membrane. In terms of biological role, part of the ABC transporter complex AraNPQ involved in the uptake of arabinooligosaccharides. AraN captures the substrate and delivers it to the two transmembrane components. The polypeptide is Arabinooligosaccharide-binding protein (araN) (Halalkalibacterium halodurans (strain ATCC BAA-125 / DSM 18197 / FERM 7344 / JCM 9153 / C-125) (Bacillus halodurans)).